The sequence spans 622 residues: Iron transport multicopper oxidase FET5 (622 aa).

The first 18 residues, 1–18, serve as a signal peptide directing secretion; that stretch reads MLFYSFVWSVLAASVALA. Residues 19–573 are Extracellular-facing; sequence KTHKLNYTAS…PKGFTTEGYL (555 aa). The N-linked (GlcNAc...) asparagine glycan is linked to Asn-24. Plastocyanin-like domains lie at 43 to 146 and 192 to 301; these read IGFN…FIIH and NILF…IQMR. Cu cation is bound by residues His-79 and His-81. N-linked (GlcNAc...) asparagine glycans are attached at residues Asn-86 and Asn-115. Cu cation is bound by residues His-128 and His-130. 5 N-linked (GlcNAc...) asparagine glycosylation sites follow: Asn-196, Asn-200, Asn-246, Asn-295, and Asn-364. Positions 392-514 constitute a Plastocyanin-like 3 domain; that stretch reads GDNINAQLLK…QGLASVFIEA (123 aa). Residues His-418, His-421, and His-423 each coordinate Cu cation. Residue Asn-455 is glycosylated (N-linked (GlcNAc...) asparagine). Positions 496, 497, 498, and 502 each coordinate Cu cation. A helical transmembrane segment spans residues 574–594; the sequence is ALIISTIIGVWGLYSIAQYGI. The Cytoplasmic segment spans residues 595–622; that stretch reads GEVIPNDEKVYHTLREILAENEIEVSRG.

This sequence belongs to the multicopper oxidase family. Interacts with FTH1. It depends on Cu cation as a cofactor.

The protein localises to the cell membrane. In terms of biological role, iron transport multicopper oxidase, which is required for Fe(2+) high affinity uptake. May be required to oxidize Fe(2+) and release it from the transporter. Essential component of copper-dependent iron transport. The sequence is that of Iron transport multicopper oxidase FET5 (FET5) from Saccharomyces cerevisiae (strain ATCC 204508 / S288c) (Baker's yeast).